We begin with the raw amino-acid sequence, 354 residues long: MAGMSTHTRRRLTDAPFLAAATGATPSRRPVWFMRQAGRSLPEYRELRAGIGMLESCFDPELVCEITMQPIRRHGVDAAILFSDIVVPLKAAGIDLDIVAGVGPVVAAPVRSVADVRALPRLRPEEVGAVVEGVRLLVDALGQTPLIGFAGAPFTLASYLVEGGPSKHHERTKAMMYADPKTWHELLGVLTDITIAFLRAQLDAGVDAVQLFDSWAGALSPADYRAFVLPHSERVFTEIADAGVPRIHFGVGTGELLGAMGEAGADVVGVDWRVSLTEAARRVGPGKALQGNLDPAVLFAGPRAVEAHARRIAEEADRALALGAAGHIFNLGHGVLPDTDPGVLTALVELVHEL.

Substrate-binding positions include 35–39 (RQAGR), D84, Y159, S214, and H333.

The protein belongs to the uroporphyrinogen decarboxylase family. As to quaternary structure, homodimer.

The protein resides in the cytoplasm. The enzyme catalyses uroporphyrinogen III + 4 H(+) = coproporphyrinogen III + 4 CO2. It participates in porphyrin-containing compound metabolism; protoporphyrin-IX biosynthesis; coproporphyrinogen-III from 5-aminolevulinate: step 4/4. In terms of biological role, catalyzes the decarboxylation of four acetate groups of uroporphyrinogen-III to yield coproporphyrinogen-III. The polypeptide is Uroporphyrinogen decarboxylase (Nocardia farcinica (strain IFM 10152)).